Reading from the N-terminus, the 496-residue chain is MATFKDACFHYRRLTALNRRLCNIGANSICMPVPDAKIKGWCLECCQIADLTHCYGCSLPHVCKWCVQNRRCFLDNEPHLLKLRTVKHPITKDKLQCIIDLYNIIFPINDKVIRKFERMIKQRKCRNQYKIEWYNHLLLPITLNAAAFKFDENNLYYVFGLYEKSVSDIYAPYRIVNFINEFDKLLLDDINFTRMSNLPIELRNHYAKKYFQLSRLPSSKLKQIYFSDFTKETVIFNTYTKTPGRSIYRNVTEFNWRDELELYSDLKNDKNKLIAAMMTSKYTRFYAHDNNFGRLKMTIFELGHHCQPNYVASNHPGNASDIQYCKWCNIKYFLSKIDWRIRDMYNLLMEFIKDCYKSNVNVGHCSSVENIYPLIKRLIWSLFTNHMDQTIEEVFNHMSPVSVEGTNVIMLILGLNISLYNEIKRTLNVDSIPMVLNLNEFSSIVKSISSKWYNVDELDKLPMSIKSTEELIEMKNSGTLTEEFELLISNSEDDNE.

The interval 1-81 (MATFKDACFH…CFLDNEPHLL (81 aa)) is RNA-binding. Residues 42 to 79 (CLECCQIADLTHCYGCSLPHVCKWCVQNRRCFLDNEPH) are zinc-binding domain. Residues 82–177 (KLRTVKHPIT…DIYAPYRIVN (96 aa)) are important for cytoskeleton localization. The tract at residues 321–496 (DIQYCKWCNI…LISNSEDDNE (176 aa)) is interaction with host IRF3. The short motif at 486–489 (LLIS) is the pLxIS motif element.

The protein belongs to the rotavirus NSP1 family. Interacts (via C-terminus) with host IRF3; this interaction leads to IRF3 degradation. Interacts with host IRF7; this interaction leads to IRF7 degradation. Interacts with host CUL1 and CUL3.

It localises to the host cytoplasm. The protein localises to the host cytoskeleton. Functionally, plays a role in the inhibition of host innate immunity by inducing the degradation of key host factors required to activate interferon production such as IRF3, IRF5 or IRF7. Associates with components of cullin RING ligases (CRLs) including CUL1 or CUL3, which are essential multisubunit ubiquitination complexes, to modulate their activities. The sequence is that of Non-structural protein 1 from Rotavirus A (isolate RVA/Monkey/South Africa/SA11-H96/1958/G3P5B[2]) (RV-A).